The following is a 301-amino-acid chain: Homeobox protein knotted-1-like 1 (301 aa).

The disordered stretch occupies residues 141–170 (CSGATSPPATTATHSDEMVGSSDEDQCSGE). Residues 144-153 (ATSPPATTAT) show a composition bias toward low complexity. The 21-residue stretch at 188–208 (ELKEMLLKKYSGCLSRLRSEF) folds into the ELK domain. Positions 209–272 (LKKRKKGKLP…NQRKRHWKPS (64 aa)) form a DNA-binding region, homeobox; TALE-type.

This sequence belongs to the TALE/KNOX homeobox family.

It is found in the nucleus. Its function is as follows. Probable transcription factor that may be involved in shoot formation during early embryogenesis. This is Homeobox protein knotted-1-like 1 (OSH6) from Oryza sativa subsp. japonica (Rice).